Reading from the N-terminus, the 123-residue chain is Protein Wnt-3b (123 aa).

Ser-1 carries O-palmitoleoyl serine; by PORCN lipidation. A disulfide bridge connects residues Cys-89 and Cys-104. The N-linked (GlcNAc...) asparagine glycan is linked to Asn-90.

It belongs to the Wnt family. Post-translationally, palmitoleoylation is required for efficient binding to frizzled receptors. Depalmitoleoylation leads to Wnt signaling pathway inhibition.

The protein localises to the secreted. Its subcellular location is the extracellular space. The protein resides in the extracellular matrix. Its function is as follows. Ligand for members of the frizzled family of seven transmembrane receptors. Probable developmental protein. May be a signaling molecule which affects the development of discrete regions of tissues. Is likely to signal over only few cell diameters. This Meleagris gallopavo (Wild turkey) protein is Protein Wnt-3b (WNT3B).